Here is a 232-residue protein sequence, read N- to C-terminus: Uridylate kinase (232 aa).

ATP is bound at residue 13 to 14 (GS). G52 is a binding site for UMP. Residues G53 and R57 each contribute to the ATP site. Residues D74 and 122–128 (LQPGQST) contribute to the UMP site. ATP is bound by residues T147, Y153, and D156.

Belongs to the UMP kinase family. In terms of assembly, homohexamer.

The protein resides in the cytoplasm. The enzyme catalyses UMP + ATP = UDP + ADP. It functions in the pathway pyrimidine metabolism; CTP biosynthesis via de novo pathway; UDP from UMP (UMPK route): step 1/1. With respect to regulation, inhibited by UTP. Catalyzes the reversible phosphorylation of UMP to UDP. In Thermofilum pendens (strain DSM 2475 / Hrk 5), this protein is Uridylate kinase.